Consider the following 432-residue polypeptide: Enolase (432 aa).

Residue Gln-168 coordinates (2R)-2-phosphoglycerate. Glu-210 acts as the Proton donor in catalysis. Residues Asp-247, Glu-288, and Asp-315 each coordinate Mg(2+). Residues Lys-340, Arg-369, Ser-370, and Lys-391 each coordinate (2R)-2-phosphoglycerate. The Proton acceptor role is filled by Lys-340.

The protein belongs to the enolase family. Requires Mg(2+) as cofactor.

The protein localises to the cytoplasm. The protein resides in the secreted. It is found in the cell surface. It carries out the reaction (2R)-2-phosphoglycerate = phosphoenolpyruvate + H2O. It participates in carbohydrate degradation; glycolysis; pyruvate from D-glyceraldehyde 3-phosphate: step 4/5. In terms of biological role, catalyzes the reversible conversion of 2-phosphoglycerate (2-PG) into phosphoenolpyruvate (PEP). It is essential for the degradation of carbohydrates via glycolysis. In Microcystis aeruginosa (strain NIES-843 / IAM M-2473), this protein is Enolase.